The primary structure comprises 250 residues: Aquaporin TIP2-2 (250 aa).

Helical transmembrane passes span 22-42 (VAEF…AIAF) and 54-74 (AGLV…VSVA). An NPA 1 motif is present at residues 83-85 (NPA). Helical transmembrane passes span 97-119 (TVLT…CLLL), 142-162 (GVVF…ATAA), and 169-189 (LGTI…LAAG). The short motif at 197 to 199 (NPA) is the NPA 2 element. The chain crosses the membrane as a helical span at residues 218 to 238 (WVGPLIGGGLAGLVYGDVFIG).

Belongs to the MIP/aquaporin (TC 1.A.8) family. TIP (TC 1.A.8.10) subfamily.

The protein resides in the vacuole membrane. Functionally, aquaporins facilitate the transport of water and small neutral solutes across cell membranes. This Zea mays (Maize) protein is Aquaporin TIP2-2 (TIP2-2).